The following is a 2511-amino-acid chain: MADPIMDLFDDTPLFNLDSLPEDAFSQGSSDPVEEALKLALGQVDPPTDPIPDPGVPILSDVVTDPALIPTPVSVPLQNLQTQQLSQIPHEVSVASAPISIQPSLSVASNSSGAATVLLSSSLGVPVSGAQVTPQQQTQQITAVTQQAAGQHAPKIVILKGPQGQTQVLQGVTGATGSPGKVTLARVLTGTPLRPGMAVVSGGTVLNATSPAQGQVKVGTGVQRLVQTANGPMKQVLLTSVPQTQSQVQTQPVQVQIPVQTQLQSPSQPQQLQAQIQAQTQVALQTQAQTQTPTSPAAAGIRPQSVTLSAVPQQVRFVLGSLPGKLVLQGDQLAALAQAKAGQTGAQAKVLTIQLQVQQQPNQQGAKFQLVSGAANAGGSPQVVQISQGQGGQRLAVPLKLLLQPQSNTVSSAGGAVSVVKVINTSAAGSTSGTTTTAASSGVRLAKIQEPVRRVETLCKQEKANRIVAEAIARAKARGERNIPRVLNQDELPAGQTSADLEGAGGATGAKKKGGGGVGGGGGGSKKKSPSAGGAKMVVGGDKKSKAKTPVIPGGGSKSKSKTKLNTITLVGKKRKRNPSSDHSDVDLSPPVSPRTLEEEMSQKRRSNRQVKRKKYTEDLDIKITDDEDELDADVDVTTTPMPAVGHVQPLGAELPPELDGDGLPSMQFFVENPSEEDAAIVDKILSMRVTKKEARQYTNVEEFFVKYKNYSYMHCEWASLEQLERDKRIHQKLKRFKTKQAQMRNLFQEDEEPFNPDYVEVDRILDESHSVDKDNGEPVVYYLVKWCSLPYEDATWELKEDVDEGKVEEFRKIESRQPRLKRTPRPAASAWKKLDESTEYKNGNQLREYQLEGVNWLLFNWYNRQNCILADEMGLGKTIQSIALLSEMFSAGVQSPFMIIAPLSTITNWEREFSNWTDMNAIVYHGSLASRQMIQQYEMYCKDDKGHLIPGAYKFDALITTFEMILSDCPELREISWRCVVIDEAHRLKNRNCKLLDSLKMLEIEHKVLLTGTPLQNTVEELFSLLHFLEPAQFPSEIEFLREFGDLKTEEQVQKLQSILKPMMLRRLKEDVEKNLAPKQETIIEVELTDVQKKYYRAILERNFSFLSMGATQNSNVPNLLNTMMELRKCCNHPYLITGAEEKIVSELREVYDPLAPDFHLQALVRSAGKLVLLDKLLPRLKAGGHKVLIFSQMVRCLDILEDYLIHKRYLYERIDGRVRGNLRQAAIDRFSKPDSDRFVFLLCTRAGGLGINLTAADTCVIFDSDWNPQNDLQAQARCHRIGQSKAVKVYRLITRNSYEREMLDKASLKLGLDRAVLQSMSGNKESSIQQFSKKEIEDLLRKGAYAAIMDENDEGSRFCEEDIDQILQRRATTITIESEGKGSTFSKASFVASENRTDIALDDPEFWQKWAKKADIDMDSLNRKNTLVIDTPRVRKQTRQFSSLRGEGGDLSDLDSDDDYPPHNSRQSRASRRSDRHSGGGYGRTDCFRVEKHLLVYGWGRWRDILSHARCKRRLSERDVETICRVILVFCLIHYRGDENIKSFIWELITPPENGREPQALLNHSGLSIPVPRGRKGKRVKAQSSFDVQKVEWIRKYNPDSLLLDDSYRKHLKHQCNKVLLRVRMLYYLKQEVIGEHADSVLSGADARDIDIWLPEMEQQDVPSGWWDAEADRCLLIGVYKHGYEMYTTMRADPCLCFVERCGRPNEQDINAEQQAADPELGEGGDYDKYSEDPEFKPATRHAKEMYEEGDSVNADGEICVEDRSAPMQVEGPSSGSSDLCYWPTSSSLTARLRRLITAYQRSYRREQLKIEAAEKGDRRRRRCEQATKLKEIARQERQQRWTRREECDFYRVVSTFGVERIKKETDAPEGDEHHMDWNRFRSFARLDKKTDESLTRYFKCFMSMCRKVCHIRPGRGDESQDMSQSLAPITEERASRTLYRVTLLCRLRERVLPHPSLEERLSLAPQTSDLPSWWSIPKHDHELLLAAARHGVSRTELSIFSDPLYSFSQSRLDYLQNQQAQAAAQIHAFSQSQDPAGIKEEGLEDESRLLGVEALCPSDSPAMLLSHSDSKVGIQAGWVWKKSKNNGPSERKLGGGGGGASDSDSDSDSGSSSSSRHSGSSDDSGDSDVEREQAALKMCDGDEENSILSLTPSQEGAPPESLTDPLRVDWPKDRILINRIENLCSLVITGHWPSGRRYISDIQLNTVSDEHELGDDLGYSRVARKINSTLSAEALEGQESEFTVKLLKEEGLKLTFSKQALMPNGEGSARKKRKDHELEDAEGVLHAPRRRDLPNWLKENPDYEVEGDMLELLVNRTKRKRRRKRVEKGAALTGSERVKVIDIRTGKKFAGVFGPALQDLREHLEENPDHAVAPEWSETVRHSGFLPEILFHRLLSPHASIPKKSRHYLHTPSLQTDDPLLGGGEGEMLVSDGAYMMDDEDLEDGGHLTSSHHFLTPAYDVKMEPSALDMDGGDSLSQGGYDSSDREAILDDVIMAPKHSDTSSSSED.

The tract at residues P484–K615 is disordered. Positions G515–G524 are enriched in gly residues. Residues K604 to K615 show a composition bias toward basic residues. Chromo domains lie at A680 to R745 and V760 to R826. Positions L859–A1033 constitute a Helicase ATP-binding domain. Residue D872–T879 coordinates ATP. Positions D984–H987 match the DEAH box motif. A Helicase C-terminal domain is found at L1174 to I1330. 4 disordered regions span residues T1440–G1482, E1715–P1736, S2086–P2168, and P2468–D2511. The span at D1452 to D1461 shows a compositional bias: acidic residues. Over residues D2111–D2125 the composition is skewed to low complexity.

This sequence belongs to the SNF2/RAD54 helicase family. CHD8 subfamily. As to quaternary structure, component of some MLL1/MLL complex.

Its subcellular location is the nucleus. The enzyme catalyses ATP + H2O = ADP + phosphate + H(+). ATP-dependent chromatin-remodeling factor, it slides nucleosomes along DNA; nucleosome sliding requires ATP. Acts as a transcription repressor by remodeling chromatin structure and recruiting histone H1 to target genes. Suppresses p53/tp53-mediated apoptosis by recruiting histone H1 and preventing p53/tp53 transactivation activity. Acts as a negative regulator of Wnt signaling pathway by regulating beta-catenin (ctnnb1) activity. Negatively regulates ctnnb1-targeted gene expression by being recruited specifically to the promoter regions of several ctnnb1 responsive genes. May also act as a transcription activator by participating in efficient U6 RNA polymerase III transcription. This Danio rerio (Zebrafish) protein is Chromodomain-helicase-DNA-binding protein 8.